We begin with the raw amino-acid sequence, 325 residues long: MMKLFTKDKDGHFIREINGIKLPFPLTEFMKVRKLGYILSALLMVISLFFIITKGFNWGLDFTGGVVFDTHFSQSANLEQIRSKLHENGIESPIVQTTGSVQDVMIRLPASNNDSTIGEHVKSMLQNVDKDIQIRSIEFVGPNVGEELAQGAVYATLATLAMVLIYVGSRFEWRLGFGSIASLAHDVIITLGVFSALQIEIDLTFVAAILSVVGYSINDSIVVFDRVRENFRKIRRLDTIDIIDISLTQTLSRTIITSVTTLVVVMALFFFGGPSIHNFSLALLVGIGFGTYSSIFVAIAIAYDVGLRREHMIPPKVDKEIDELP.

The next 6 membrane-spanning stretches (helical) occupy residues 36-56, 148-168, 175-197, 202-224, 254-274, and 281-301; these read GYIL…TKGF, LAQG…IYVG, LGFG…FSAL, DLTF…IVVF, TIIT…FGGP, and LALL…AIAI.

It belongs to the SecD/SecF family. SecF subfamily. Forms a complex with SecD. Part of the essential Sec protein translocation apparatus which comprises SecA, SecYEG and auxiliary proteins SecDF-YajC and YidC.

The protein resides in the cell inner membrane. Part of the Sec protein translocase complex. Interacts with the SecYEG preprotein conducting channel. SecDF uses the proton motive force (PMF) to complete protein translocation after the ATP-dependent function of SecA. This is Protein translocase subunit SecF from Haemophilus influenzae (strain ATCC 51907 / DSM 11121 / KW20 / Rd).